The chain runs to 167 residues: Translationally-controlled tumor protein homolog (167 aa).

The 167-residue stretch at 1 to 167 (MIIYKDIFSN…WKHGIVEEKI (167 aa)) folds into the TCTP domain. Ser-9 and Ser-15 each carry phosphoserine.

The protein belongs to the TCTP family. In terms of assembly, interacts with the 40S and 60S ribosomal subunits. Interacts with microtubules.

The protein resides in the cytoplasm. It is found in the cytoskeleton. It localises to the mitochondrion. In terms of biological role, involved in protein synthesis. Involved in microtubule stabilization. The chain is Translationally-controlled tumor protein homolog (TMA19) from Saccharomyces cerevisiae (strain ATCC 204508 / S288c) (Baker's yeast).